Here is a 304-residue protein sequence, read N- to C-terminus: Solute carrier family 25 member 34 (304 aa).

3 Solcar repeats span residues 4–97 (VPPA…ACQA), 101–194 (QQPG…AKAW), and 204–295 (DSWL…LRKL). The next 6 membrane-spanning stretches (helical) occupy residues 7-27 (AVDL…TNPL), 45-65 (TYPR…RADG), 98-120 (GLSQ…GAFV), 170-191 (VGGA…FASA), 206-226 (WLVA…VMTP), and 278-301 (LGPH…WGQH).

Belongs to the mitochondrial carrier (TC 2.A.29) family.

It is found in the mitochondrion inner membrane. It carries out the reaction a dicarboxylate(in) + sulfate(out) = a dicarboxylate(out) + sulfate(in). In terms of biological role, putative antiporter that exchanges dicarboxylates and sulfur oxoanions across the inner membrane of mitochondria. This Bos taurus (Bovine) protein is Solute carrier family 25 member 34 (SLC25A34).